Here is a 379-residue protein sequence, read N- to C-terminus: F-box protein At5g18160 (379 aa).

Positions 1-26 (MDKQDEKKQGTTKSSSTLTTRCSHGN) are disordered. The span at 11–26 (TTKSSSTLTTRCSHGN) shows a compositional bias: polar residues. In terms of domain architecture, F-box spans 28–74 (ISQSNSIPLDITIEILSRLPAKSIVRSRSVSKLWSSITTTPEFIKHR).

The chain is F-box protein At5g18160 from Arabidopsis thaliana (Mouse-ear cress).